We begin with the raw amino-acid sequence, 216 residues long: Phosphatidylserine decarboxylase proenzyme (216 aa).

The Schiff-base intermediate with substrate; via pyruvic acid role is filled by Ser-185. Ser-185 carries the post-translational modification Pyruvic acid (Ser); by autocatalysis.

This sequence belongs to the phosphatidylserine decarboxylase family. PSD-A subfamily. Heterodimer of a large membrane-associated beta subunit and a small pyruvoyl-containing alpha subunit. Requires pyruvate as cofactor. Post-translationally, is synthesized initially as an inactive proenzyme. Formation of the active enzyme involves a self-maturation process in which the active site pyruvoyl group is generated from an internal serine residue via an autocatalytic post-translational modification. Two non-identical subunits are generated from the proenzyme in this reaction, and the pyruvate is formed at the N-terminus of the alpha chain, which is derived from the carboxyl end of the proenzyme. The post-translation cleavage follows an unusual pathway, termed non-hydrolytic serinolysis, in which the side chain hydroxyl group of the serine supplies its oxygen atom to form the C-terminus of the beta chain, while the remainder of the serine residue undergoes an oxidative deamination to produce ammonia and the pyruvoyl prosthetic group on the alpha chain.

It localises to the cell membrane. It catalyses the reaction a 1,2-diacyl-sn-glycero-3-phospho-L-serine + H(+) = a 1,2-diacyl-sn-glycero-3-phosphoethanolamine + CO2. Its pathway is phospholipid metabolism; phosphatidylethanolamine biosynthesis; phosphatidylethanolamine from CDP-diacylglycerol: step 2/2. Catalyzes the formation of phosphatidylethanolamine (PtdEtn) from phosphatidylserine (PtdSer). The chain is Phosphatidylserine decarboxylase proenzyme from Nitrosomonas europaea (strain ATCC 19718 / CIP 103999 / KCTC 2705 / NBRC 14298).